The sequence spans 209 residues: Guanylate kinase (209 aa).

The region spanning 9–188 (GIMLVISSPS…SVYQIKCIFT (180 aa)) is the Guanylate kinase-like domain. Residue 16–23 (SPSGGGKT) participates in ATP binding.

The protein belongs to the guanylate kinase family.

The protein resides in the cytoplasm. It catalyses the reaction GMP + ATP = GDP + ADP. Functionally, essential for recycling GMP and indirectly, cGMP. In Ehrlichia chaffeensis (strain ATCC CRL-10679 / Arkansas), this protein is Guanylate kinase.